The chain runs to 257 residues: Deoxyribose-phosphate aldolase (257 aa).

Asp102 (proton donor/acceptor) is an active-site residue. Lys166 acts as the Schiff-base intermediate with acetaldehyde in catalysis. The Proton donor/acceptor role is filled by Lys198.

Belongs to the DeoC/FbaB aldolase family. DeoC type 2 subfamily.

The protein localises to the cytoplasm. The catalysed reaction is 2-deoxy-D-ribose 5-phosphate = D-glyceraldehyde 3-phosphate + acetaldehyde. It functions in the pathway carbohydrate degradation; 2-deoxy-D-ribose 1-phosphate degradation; D-glyceraldehyde 3-phosphate and acetaldehyde from 2-deoxy-alpha-D-ribose 1-phosphate: step 2/2. Catalyzes a reversible aldol reaction between acetaldehyde and D-glyceraldehyde 3-phosphate to generate 2-deoxy-D-ribose 5-phosphate. This is Deoxyribose-phosphate aldolase from Shewanella frigidimarina (strain NCIMB 400).